A 127-amino-acid chain; its full sequence is Large ribosomal subunit protein bL17 (127 aa).

Belongs to the bacterial ribosomal protein bL17 family. As to quaternary structure, part of the 50S ribosomal subunit. Contacts protein L32.

The sequence is that of Large ribosomal subunit protein bL17 from Photobacterium profundum (strain SS9).